The chain runs to 364 residues: D-alanine--D-alanine ligase A (364 aa).

The ATP-grasp domain occupies 145–348; it reads KRLLRDAGLN…YTDLITRLIE (204 aa). Residue 175 to 230 coordinates ATP; sequence ESKLGLPLFVKPANQGSSVGVSKVTSEEQYAIAVDLAFEFDHKVIVEQGIKGREIE. Positions 302, 315, and 317 each coordinate Mg(2+).

Belongs to the D-alanine--D-alanine ligase family. Mg(2+) is required as a cofactor. Requires Mn(2+) as cofactor.

It localises to the cytoplasm. The enzyme catalyses 2 D-alanine + ATP = D-alanyl-D-alanine + ADP + phosphate + H(+). The protein operates within cell wall biogenesis; peptidoglycan biosynthesis. Cell wall formation. The protein is D-alanine--D-alanine ligase A (ddlA) of Escherichia coli O157:H7.